We begin with the raw amino-acid sequence, 905 residues long: Protein translocase subunit SecA (905 aa).

ATP contacts are provided by residues Gln-87, 105-109 (GEGKT), and Asp-512. Positions 565-584 (RRIDNQLRGRSGRQGDPGSS) are disordered. Cys-886, Cys-888, Cys-897, and His-898 together coordinate Zn(2+).

It belongs to the SecA family. As to quaternary structure, monomer and homodimer. Part of the essential Sec protein translocation apparatus which comprises SecA, SecYEG and auxiliary proteins SecDF-YajC and YidC. It depends on Zn(2+) as a cofactor.

The protein resides in the cell inner membrane. It is found in the cytoplasm. The catalysed reaction is ATP + H2O + cellular proteinSide 1 = ADP + phosphate + cellular proteinSide 2.. Part of the Sec protein translocase complex. Interacts with the SecYEG preprotein conducting channel. Has a central role in coupling the hydrolysis of ATP to the transfer of proteins into and across the cell membrane, serving both as a receptor for the preprotein-SecB complex and as an ATP-driven molecular motor driving the stepwise translocation of polypeptide chains across the membrane. The protein is Protein translocase subunit SecA of Haemophilus ducreyi (strain 35000HP / ATCC 700724).